We begin with the raw amino-acid sequence, 254 residues long: Small ribosomal subunit protein uS2 (254 aa).

The span at 228–248 shows a compositional bias: basic and acidic residues; sequence RKERKGQDAEEELKKASEPKA. Positions 228-254 are disordered; sequence RKERKGQDAEEELKKASEPKAAEAAAE.

It belongs to the universal ribosomal protein uS2 family.

This chain is Small ribosomal subunit protein uS2, found in Nitratidesulfovibrio vulgaris (strain ATCC 29579 / DSM 644 / CCUG 34227 / NCIMB 8303 / VKM B-1760 / Hildenborough) (Desulfovibrio vulgaris).